The following is a 338-amino-acid chain: Taste receptor type 2 member 39 (338 aa).

Residues 1 to 30 (MLGRCFPPNTKEKQQLRMIKLCDPAESELS) are Extracellular-facing. The helical transmembrane segment at 31 to 51 (PFLITLTLAVLLAEYLTGIIA) threads the bilayer. At 52–74 (NGFITAIHAAECVQNKSVSTSGR) the chain is on the cytoplasmic side. The chain crosses the membrane as a helical span at residues 75–95 (ILVFLSVSRIALQSLMMLEIT). Residues 96 to 116 (ISSTSLSFYSEDTVYYAFKIS) are Extracellular-facing. Residues 117–137 (FIFLNFCSLWFAAWLSFFYFV) form a helical membrane-spanning segment. Residues 138–156 (KIANFSYPLFLKLRWRISG) lie on the Cytoplasmic side of the membrane. Residues 157 to 177 (LIPWLLWLSVFISFSHSMFCI) form a helical membrane-spanning segment. The Extracellular segment spans residues 178 to 205 (NICTGYCDNSFPIHSSNSTEKTYFSEIS). The N-linked (GlcNAc...) asparagine glycan is linked to asparagine 194. A helical transmembrane segment spans residues 206 to 226 (VVSLAFFFNLGIVIPLIMFIL). Topologically, residues 227–262 (AAILLILSLKRHTLYMXSNATGSKDPSMEAHIGAIK) are cytoplasmic. Residues 263–283 (ATSYFLILYIFNAVALFIYLS) traverse the membrane as a helical segment. The Extracellular segment spans residues 284-291 (NMFDINSL). Residues 292–312 (WNTLCQIIMAAYPASHSILLI) traverse the membrane as a helical segment. The Cytoplasmic portion of the chain corresponds to 313–338 (KDNPGLRRAWKQLQHRLHLYPKEWTL).

Belongs to the G-protein coupled receptor T2R family.

The protein localises to the membrane. Its function is as follows. Receptor that may play a role in the perception of bitterness and is gustducin-linked. May play a role in sensing the chemical composition of the gastrointestinal content. The activity of this receptor may stimulate alpha gustducin, mediate PLC-beta-2 activation and lead to the gating of TRPM5. This Papio hamadryas (Hamadryas baboon) protein is Taste receptor type 2 member 39 (TAS2R39).